A 286-amino-acid polypeptide reads, in one-letter code: Protease HtpX homolog (286 aa).

2 consecutive transmembrane segments (helical) span residues 7–27 (TFML…MIGG) and 29–49 (SGMM…YWFS). Zn(2+) is bound at residue His131. Glu132 is an active-site residue. His135 lines the Zn(2+) pocket. 2 helical membrane passes run 146 to 166 (LSAT…FFGG) and 177 to 197 (IAGI…QMAI). Glu202 is a Zn(2+) binding site.

Belongs to the peptidase M48B family. The cofactor is Zn(2+).

It is found in the cell inner membrane. The polypeptide is Protease HtpX homolog (Ralstonia nicotianae (strain ATCC BAA-1114 / GMI1000) (Ralstonia solanacearum)).